A 193-amino-acid chain; its full sequence is dCTP deaminase (193 aa).

DCTP-binding positions include 110-115 (RSSLAR), Asp128, 136-138 (VLE), Tyr171, Lys178, and Gln182. The active-site Proton donor/acceptor is the Glu138.

It belongs to the dCTP deaminase family. Homotrimer.

The catalysed reaction is dCTP + H2O + H(+) = dUTP + NH4(+). It participates in pyrimidine metabolism; dUMP biosynthesis; dUMP from dCTP (dUTP route): step 1/2. Functionally, catalyzes the deamination of dCTP to dUTP. The chain is dCTP deaminase from Buchnera aphidicola subsp. Acyrthosiphon pisum (strain APS) (Acyrthosiphon pisum symbiotic bacterium).